Reading from the N-terminus, the 161-residue chain is Nucleotide-binding protein BamMC406_2474 (161 aa).

The protein belongs to the YajQ family.

Its function is as follows. Nucleotide-binding protein. The polypeptide is Nucleotide-binding protein BamMC406_2474 (Burkholderia ambifaria (strain MC40-6)).